We begin with the raw amino-acid sequence, 105 residues long: U2-lycotoxin-Ls1c (105 aa).

A signal peptide spans 1-17 (MIKYVLISALLVVAVYS). Positions 18–41 (FTIEDSEDALLEEAEDELDTEEER) are excised as a propeptide. Disulfide bonds link cysteine 51–cysteine 67, cysteine 58–cysteine 97, cysteine 60–cysteine 83, and cysteine 69–cysteine 81.

It belongs to the neurotoxin 04 (omega-agtx) family. 01 (type I omega-agtx) subfamily. Expressed by the venom gland.

Its subcellular location is the secreted. Functionally, insecticidal to house crickets. It induces an excitatory slow-onset impact that leads to irreversible spastic paralysis. It also modifies human voltage-gated potassium channel Kv1.5/KCNA5. Most likely, it binds to the voltage-sensing domain of the channel, suggesting it does not block the pore but prevents its opening at physiological membrane potentials. The recombinant peptide binds to the channel in an irreversible manner and slows down the hKv1.5 current activation kinetics. It is not toxic to mice, when intracranially injected (at 0.5 ug/g mouse). In Lycosa singoriensis (Wolf spider), this protein is U2-lycotoxin-Ls1c.